Consider the following 211-residue polypeptide: Transcription antitermination protein NusB (211 aa).

Belongs to the NusB family.

Involved in transcription antitermination. Required for transcription of ribosomal RNA (rRNA) genes. Binds specifically to the boxA antiterminator sequence of the ribosomal RNA (rrn) operons. The sequence is that of Transcription antitermination protein NusB from Gloeobacter violaceus (strain ATCC 29082 / PCC 7421).